An 800-amino-acid chain; its full sequence is Putative antiporter subunit mnhA2 (800 aa).

The next 20 helical transmembrane spans lie at 1-21 (MSLV…LLMS), 33-53 (IALV…PSVA), 78-98 (GLSL…FFYA), 118-138 (LFMF…MYIF), 167-187 (FMIT…LYIM), 207-227 (GLFI…SAQF), 241-261 (TPVS…FLLL), 273-293 (YVYI…ITAL), 300-320 (GILA…VGIG), 331-351 (IASI…NHAI), 387-407 (LVMT…GFLS), 424-444 (FSLI…VFTF), 472-492 (PWLF…IFFV), 527-547 (GFNI…VLAI), 595-615 (IIMT…RIGL), 627-647 (GALE…LIFI), 651-671 (LTMV…FIAM), 676-696 (LALT…VSFS), 712-732 (IIKI…IFIT), and 768-788 (LDTL…YTLL).

The protein belongs to the CPA3 antiporters (TC 2.A.63) subunit A family. In terms of assembly, may form a heterooligomeric complex that consists of seven subunits: mnhA2, mnhB2, mnhC2, mnhD2, mnhE2, mnhF2 and mnhG2.

It is found in the cell membrane. The polypeptide is Putative antiporter subunit mnhA2 (mnhA2) (Staphylococcus aureus (strain USA300)).